A 470-amino-acid polypeptide reads, in one-letter code: Argininosuccinate lyase (470 aa).

The protein belongs to the lyase 1 family. Argininosuccinate lyase subfamily.

It is found in the cytoplasm. It carries out the reaction 2-(N(omega)-L-arginino)succinate = fumarate + L-arginine. Its pathway is amino-acid biosynthesis; L-arginine biosynthesis; L-arginine from L-ornithine and carbamoyl phosphate: step 3/3. This chain is Argininosuccinate lyase, found in Mycobacterium tuberculosis (strain ATCC 25618 / H37Rv).